The sequence spans 484 residues: Protein phosphatase 1B (484 aa).

The span at 1–14 shows a compositional bias: basic and acidic residues; that stretch reads MGAFLDKPKTEKHN. A disordered region spans residues 1–20; it reads MGAFLDKPKTEKHNAHGAGN. The N-myristoyl glycine moiety is linked to residue glycine 2. Lysine 12 participates in a covalent cross-link: Glycyl lysine isopeptide (Lys-Gly) (interchain with G-Cter in ISG15). In terms of domain architecture, PPM-type phosphatase spans 23–295; that stretch reads RYGLSSMQGW…DNMSIVLVCF (273 aa). Mn(2+) is bound by residues aspartate 60 and glycine 61. Lysine 142 participates in a covalent cross-link: Glycyl lysine isopeptide (Lys-Gly) (interchain with G-Cter in ISG15). 2 residues coordinate Mn(2+): aspartate 243 and aspartate 286. Phosphoserine is present on serine 391. Residues 431–484 form a disordered region; it reads EENPAEQAATAASSNSDAGNTVAMQESHTESKSDLAELDSCTEDAGTKMSGEKL. A compositionally biased stretch (polar residues) spans 440-456; that stretch reads TAASSNSDAGNTVAMQE.

Belongs to the PP2C family. As to quaternary structure, monomer. Interacts with PAK6. Interacts with the phosphorylated form of IKBKB/IKKB. Mg(2+) serves as cofactor. It depends on Mn(2+) as a cofactor. Isgylation negatively regulates its activity. In terms of processing, N-myristoylation is essential for the recognition of its substrates for dephosphorylation.

It localises to the cytoplasm. Its subcellular location is the cytosol. The protein resides in the membrane. The enzyme catalyses O-phospho-L-seryl-[protein] + H2O = L-seryl-[protein] + phosphate. It carries out the reaction O-phospho-L-threonyl-[protein] + H2O = L-threonyl-[protein] + phosphate. Its function is as follows. Enzyme with a broad specificity. Dephosphorylates PRKAA1 and PRKAA2. Inhibits TBK1-mediated antiviral signaling by dephosphorylating it at 'Ser-172'. Plays an important role in the termination of TNF-alpha-mediated NF-kappa-B activation through dephosphorylating and inactivating IKBKB/IKKB. This chain is Protein phosphatase 1B (PPM1B), found in Bos taurus (Bovine).